The chain runs to 301 residues: Ribonuclease Z (301 aa).

7 residues coordinate Zn(2+): H60, H62, D64, H65, H137, D207, and H265. D64 (proton acceptor) is an active-site residue.

Belongs to the RNase Z family. Homodimer. Requires Zn(2+) as cofactor.

The catalysed reaction is Endonucleolytic cleavage of RNA, removing extra 3' nucleotides from tRNA precursor, generating 3' termini of tRNAs. A 3'-hydroxy group is left at the tRNA terminus and a 5'-phosphoryl group is left at the trailer molecule.. Its function is as follows. Zinc phosphodiesterase, which displays some tRNA 3'-processing endonuclease activity. Probably involved in tRNA maturation, by removing a 3'-trailer from precursor tRNA. The sequence is that of Ribonuclease Z from Exiguobacterium sp. (strain ATCC BAA-1283 / AT1b).